The chain runs to 211 residues: MNKPSIDQTPANQARARVYRLLSDLFAKEIDHQRLQSLQSAEAQAFFDLLAGEPRLAPEVNIIQEVLAELGDEASLLNLAADYCGLFLVGGKQSANPYAGLYLTPEGDEEQPQLFGPQHQEMLALLKQSKLGVQSDFPEPADHISVILAYVAQQATSLDDKAQQRFIAKYLDAWLAEFAKRVSDRDPGRFYQALARLTQIWVSLDCEALGA.

This sequence belongs to the TorD/DmsD family. TorD subfamily.

Its subcellular location is the cytoplasm. In terms of biological role, involved in the biogenesis of TorA. Acts on TorA before the insertion of the molybdenum cofactor and, as a result, probably favors a conformation of the apoenzyme that is competent for acquiring the cofactor. The chain is Chaperone protein TorD from Shewanella loihica (strain ATCC BAA-1088 / PV-4).